The following is a 174-amino-acid chain: DNA replication inhibitor plutonium (174 aa).

ANK repeat units follow at residues 39–68 (YGNTALLKACYLGRFECARTLLEFGANIFA) and 72–103 (FGQNALTLATYAGHLTLVKELLRRRSYKDFNL). A Phosphothreonine modification is found at T167.

Inhibits DNA replication early in developments. May bind and block the action of a replication or initiation factor. This is DNA replication inhibitor plutonium (plu) from Drosophila melanogaster (Fruit fly).